The sequence spans 862 residues: Probable alpha,alpha-trehalose-phosphate synthase [UDP-forming] 11 (862 aa).

Residue serine 5 is modified to Phosphoserine. The glycosyltransferase stretch occupies residues 50 to 538 (PKRIVVSNQL…ARSYDQDLQR (489 aa)). The interval 838 to 862 (SKHEQQKKQSKFTFQQPMGQCRKKA) is disordered.

The protein in the N-terminal section; belongs to the glycosyltransferase 20 family. In the C-terminal section; belongs to the trehalose phosphatase family. Expressed in leaves, roots, stems and flowers.

The catalysed reaction is D-glucose 6-phosphate + UDP-alpha-D-glucose = alpha,alpha-trehalose 6-phosphate + UDP + H(+). The protein is Probable alpha,alpha-trehalose-phosphate synthase [UDP-forming] 11 (TPS11) of Arabidopsis thaliana (Mouse-ear cress).